The sequence spans 307 residues: Putative transcription factor bHLH086 (307 aa).

Disordered regions lie at residues 1 to 49 (MSLI…DHQN) and 167 to 215 (HEST…QSLA). Polar residues-rich tracts occupy residues 12–28 (NYISTPNSSEDLSSPQN) and 183–197 (GENTQLSKKPSSGTN). Residues 207–220 (SPKDPQSLAAKNRR) are basic motif. A bHLH domain is found at 207–256 (SPKDPQSLAAKNRRERISERLKVLQELVPNGTKVDLVTMLEKAIGYVKFL). The segment at 221-256 (ERISERLKVLQELVPNGTKVDLVTMLEKAIGYVKFL) is helix-loop-helix motif.

As to quaternary structure, homodimer. Forms heterodimers with RHD6. Interacts with TIFY10B/JAZ2, TIFY6A/JAZ4, TIFY5A/JAZ8, TIFY7/JAZ9 and TIFY9/JAZ10.

The protein localises to the nucleus. Its function is as follows. Transcription factor that is specifically required for the development of root hairs. Acts with RHD6 to positively regulate root hair development. Acts downstream of genes that regulate epidermal pattern formation, such as GL2. Acts with RHD6 as transcription factor that integrates a jasmonate (JA) signaling pathway that stimulates root hair growth. The protein is Putative transcription factor bHLH086 of Arabidopsis thaliana (Mouse-ear cress).